The following is a 1038-amino-acid chain: Bone morphogenetic protein receptor type-2 (1038 aa).

An N-terminal signal peptide occupies residues 1–26 (MTSSLHRPFRVPWLLWAVLLVSTTAA). Residues 27 to 150 (SQNQERLCAF…PPHSFNRDET (124 aa)) are Extracellular-facing. Intrachain disulfides connect cysteine 34-cysteine 66, cysteine 60-cysteine 84, cysteine 94-cysteine 117, cysteine 99-cysteine 116, and cysteine 118-cysteine 123. Asparagine 55 is a glycosylation site (N-linked (GlcNAc...) asparagine). Residue asparagine 110 is glycosylated (N-linked (GlcNAc...) asparagine). N-linked (GlcNAc...) asparagine glycosylation occurs at asparagine 126. Residues 151–171 (IIIALASVSVLAVLIVALCFG) traverse the membrane as a helical segment. The Cytoplasmic portion of the chain corresponds to 172-1038 (YRMLTGDRKQ…VSKDIGMNCL (867 aa)). One can recognise a Protein kinase domain in the interval 203–504 (LKLLELIGRG…QCAEERMAEL (302 aa)). ATP is bound by residues 209–217 (IGRGRYGAV), lysine 230, and 280–282 (EYY). The Proton acceptor role is filled by aspartate 333. Residues 337–338 (RN) and aspartate 351 contribute to the ATP site. Threonine 379 is subject to Phosphothreonine. A Phosphoserine modification is found at serine 586. A disordered region spans residues 593–626 (QAQARIPSPETSVTSLSTNTTTTNTTGLTPSTGM). A compositionally biased stretch (low complexity) spans 603 to 626 (TSVTSLSTNTTTTNTTGLTPSTGM). 2 positions are modified to phosphoserine: serine 680 and serine 681. The interval 746-769 (PKQQNLPKRPTSLPLNTKNSTKEP) is disordered. Position 843 is a phosphoserine (serine 843). Over residues 872 to 896 (RREQQAGHDEGVLDRLVDRRERPLE) the composition is skewed to basic and acidic residues. The disordered stretch occupies residues 872 to 974 (RREQQAGHDE…SGSGEKIKRR (103 aa)). Composition is skewed to polar residues over residues 909–924 (PCSEQDILTQGVTSTA) and 937–964 (RPNSLDLSATNILDGSSIQIGESTQDGK).

It belongs to the protein kinase superfamily. TKL Ser/Thr protein kinase family. TGFB receptor subfamily. In terms of assembly, interacts with GDF5. Interacts with BMP4. Interacts with SCUBE3. Interacts with TSC22D1/TSC-22. Interacts with activin A/INHBA. Mg(2+) is required as a cofactor. The cofactor is Mn(2+).

Its subcellular location is the cell membrane. It catalyses the reaction L-threonyl-[receptor-protein] + ATP = O-phospho-L-threonyl-[receptor-protein] + ADP + H(+). It carries out the reaction L-seryl-[receptor-protein] + ATP = O-phospho-L-seryl-[receptor-protein] + ADP + H(+). On ligand binding, forms a receptor complex consisting of two type II and two type I transmembrane serine/threonine kinases. Type II receptors phosphorylate and activate type I receptors which autophosphorylate, then bind and activate SMAD transcriptional regulators. Can also mediate signaling through the activation of the p38MAPK cascade. Binds to BMP7, BMP2 and, less efficiently, BMP4. Binding is weak but enhanced by the presence of type I receptors for BMPs. Mediates induction of adipogenesis by GDF6. Promotes signaling also by binding to activin A/INHBA. This is Bone morphogenetic protein receptor type-2 (Bmpr2) from Mus musculus (Mouse).